The following is a 444-amino-acid chain: Gamma-glutamyl phosphate reductase (444 aa).

Belongs to the gamma-glutamyl phosphate reductase family.

The protein resides in the cytoplasm. It catalyses the reaction L-glutamate 5-semialdehyde + phosphate + NADP(+) = L-glutamyl 5-phosphate + NADPH + H(+). The protein operates within amino-acid biosynthesis; L-proline biosynthesis; L-glutamate 5-semialdehyde from L-glutamate: step 2/2. Its function is as follows. Catalyzes the NADPH-dependent reduction of L-glutamate 5-phosphate into L-glutamate 5-semialdehyde and phosphate. The product spontaneously undergoes cyclization to form 1-pyrroline-5-carboxylate. The polypeptide is Gamma-glutamyl phosphate reductase (Albidiferax ferrireducens (strain ATCC BAA-621 / DSM 15236 / T118) (Rhodoferax ferrireducens)).